The chain runs to 507 residues: Pre-glycoprotein polyprotein GP complex (507 aa).

A lipid anchor (N-myristoyl glycine; by host) is attached at G2. Residues 2-17 (GQVVTFLQSLPEVINE) are Extracellular-facing. A helical transmembrane segment spans residues 18–33 (AINIALIAISIICILK). Topologically, residues 34 to 58 (GLVNFWKCGVVQLAIFLCLAGRKCD) are cytoplasmic. C57 contacts Zn(2+). Residues 59 to 445 (GLMIDRRHEL…QGKTPIALTD (387 aa)) are Extracellular-facing. Disulfide bonds link C86–C247, C292–C305, C314–C323, and C377–C398. Residues N89, N111, N179, and N240 are each glycosylated (N-linked (GlcNAc...) asparagine; by host). 4 N-linked (GlcNAc...) asparagine; by host glycosylation sites follow: N378, N386, N403, and N408. Residues 446 to 466 (ICFWSLVFFTSTVFLQLVGIP) form a helical membrane-spanning segment. Topologically, residues 467 to 507 (THRHLVGEGCPKPHRITSNSLCACGYYKIPKRPTRWVRKGK) are cytoplasmic. The Zn(2+) site is built by H468, H470, C476, H480, C488, and C490.

Belongs to the arenaviridae GPC protein family. Interacts with glycoprotein G2. Part of the GP complex (GP-C) together with glycoprotein G1 and glycoprotein G2. The GP-complex interacts with protein Z, which interacts with ribonucleocapsid; these interactions may induce virion budding. In terms of assembly, homotrimer; disulfide-linked. In pre-fusion state, G1 homotrimers bind G2 homotrimers via ionic interactions. Part of the GP complex (GP-C) together with glycoprotein G2 and the stable signal peptide. The GP-complex interacts with protein Z, which interacts with ribonucleocapsid; these interactions may induce virion budding. As to quaternary structure, homotrimer. Interacts with the stable signal peptide. In pre-fusion state, G2 homotrimers bind G1 homotrimers via ionic interactions. Part of the GP complex (GP-C) together with glycoprotein G1 and the stable signal peptide. Acidification in the endosome triggers rearrangements, which ultimately leads to a 6 helix bundle formed by the two heptad repeat domains (HR1 and HR2) in post-fusion state. The GP-complex interacts with protein Z, which interacts with ribonucleocapsid; these interactions may induce virion budding. In terms of processing, specific enzymatic cleavages in vivo yield mature proteins. GP-C polyprotein is cleaved in the endoplasmic reticulum by the host protease MBTPS1. Only cleaved glycoprotein is incorporated into virions. Post-translationally, the SSP remains stably associated with the GP complex following cleavage by signal peptidase and plays crucial roles in the trafficking of GP through the secretory pathway. Myristoylation is necessary for GP2-mediated fusion activity.

It localises to the virion membrane. Its subcellular location is the host endoplasmic reticulum membrane. The protein localises to the host Golgi apparatus membrane. It is found in the host cell membrane. Functionally, functions as a cleaved signal peptide that is retained as the third component of the GP complex (GP-C). Helps to stabilize the spike complex in its native conformation. The SSP is required for efficient glycoprotein expression, post-translational maturation cleavage of G1 and G2, glycoprotein transport to the cell surface plasma membrane, formation of infectious virus particles, and acid pH-dependent glycoprotein-mediated cell fusion. Forms the virion spikes together with glycoprotein G2. The glycoprotein spike trimers are connected to the underlying matrix. Interacts with the host receptor leading to virus endocytosis. Its function is as follows. Forms the virion spikes together with glycoprotein G1. The glycoprotein spike trimers are connected to the underlying matrix. Class I viral fusion protein that directs fusion of viral and host endosomal membranes, leading to delivery of the nucleocapsid into the cytoplasm. Membrane fusion is mediated by irreversible conformational changes induced by acidification. This is Pre-glycoprotein polyprotein GP complex from Allpahuayo mammarenavirus (isolate Rat/Peru/CLHP-2472/1997) (ALLV).